The following is a 365-amino-acid chain: Probable flavin mononucleotide-dependent alkene reductase (365 aa).

Residues 30–32 (PLT), A63, and Q105 each bind FMN. The Proton donor role is filled by Y191. FMN is bound by residues R238, S303, and 324-325 (GT).

Belongs to the NADH:flavin oxidoreductase/NADH oxidase family. As to quaternary structure, monomer. FMN serves as cofactor.

The protein resides in the cytoplasm. Its subcellular location is the cytosol. In terms of biological role, may function as a flavin mononucleotide (FMN)-dependent alkene reductase on substrates carrying alpha,beta-unsaturated carbonyl groups (ketones, aldehydes, carboxylic acids, esters, lactones or cyclic imides). The catalysis depends on NAD(P)H, which acts as a hydride donor for the reduction. Seems to be involved in metabolic pathways required for efficient replication of amastigotes within macrophages. Acts as a FMN-dependent nitroreductase that activates anti-leishmanial bicyclic nitroaromatic prodrugs including delamanid, DNDI-VL-2098 and (R)-PA-824, forming toxic products that kill the parasites. This chain is Probable flavin mononucleotide-dependent alkene reductase, found in Leishmania infantum.